Consider the following 278-residue polypeptide: Nucleotide-binding protein Tlet_0523 (278 aa).

Position 9–16 (Gly-9–Ser-16) interacts with ATP. Asp-58–Ser-61 contributes to the GTP binding site.

Belongs to the RapZ-like family.

Displays ATPase and GTPase activities. In Pseudothermotoga lettingae (strain ATCC BAA-301 / DSM 14385 / NBRC 107922 / TMO) (Thermotoga lettingae), this protein is Nucleotide-binding protein Tlet_0523.